The primary structure comprises 120 residues: Autophagy-related protein 8d (120 aa).

Glycine 117 is lipidated: Phosphatidylethanolamine amidated glycine. A propeptide spans 118–120 (IFF) (removed in mature form).

It belongs to the ATG8 family. Interacts with ATG4B. Interacts with NBR1. In terms of processing, the C-terminal 3 residues are removed by ATG4 to expose Gly-117 at the C-terminus. This Gly-117 forms then a thioester bond with the 'Cys-558' of ATG7 (E1-like activating enzyme) before being transferred to the 'Cys-258' of ATG3 (the specific E2 conjugating enzyme), in order to be finally amidated with phosphatidylethanolamine. This lipid modification anchors ATG8 to autophagosomes. Constitutively expressed.

It localises to the cytoplasmic vesicle. The protein localises to the autophagosome membrane. It is found in the vacuole membrane. Its subcellular location is the cytoplasm. The protein resides in the cytoskeleton. In terms of biological role, ubiquitin-like modifier involved in autophagosomes formation. May mediate the delivery of the autophagosomes to the vacuole via the microtubule cytoskeleton. The chain is Autophagy-related protein 8d (ATG8D) from Arabidopsis thaliana (Mouse-ear cress).